The sequence spans 804 residues: Endoplasmin (804 aa).

Positions 1–21 are cleaved as a signal peptide; the sequence is MRALWVLGLCCVLLTFGSVRA. The SRT pseudosubstrate motif signature appears at 42–44; sequence SRT. N-linked (GlcNAc...) asparagine glycosylation is present at Asn-62. Ser-64 is modified (phosphoserine). Asn-107 carries N-linked (GlcNAc...) asparagine glycosylation. 3 residues coordinate ATP: Asn-107, Asp-149, and Asn-162. Residue Lys-168 is modified to N6-(2-hydroxyisobutyryl)lysine. Ser-172 is modified (phosphoserine). ATP is bound at residue Phe-199. N-linked (GlcNAc...) asparagine glycosylation occurs at Asn-217. The disordered stretch occupies residues 288–323; it reads TVEEPAEEEEAAKEDKEESDDEAAVEEEEDEKKPKT. Positions 289-317 are enriched in acidic residues; sequence VEEPAEEEEAAKEDKEESDDEAAVEEEED. Phosphoserine occurs at positions 306 and 403. Lys-404 is subject to N6-succinyllysine. The N-linked (GlcNAc...) asparagine glycan is linked to Asn-445. Ser-447 carries the phosphoserine modification. Position 479 is an N6-acetyllysine (Lys-479). N-linked (GlcNAc...) asparagine glycosylation is found at Asn-481 and Asn-502. Lys-633 carries the N6-succinyllysine modification. A disordered region spans residues 750-804; it reads DPDAKVEEEPEEEPEETTEDTAEDTEQDEEEEMDAGTDEEEQETAEKSTAEKDEL. Residues 757–792 are compositionally biased toward acidic residues; that stretch reads EEPEEEPEETTEDTAEDTEQDEEEEMDAGTDEEEQE. Thr-786 carries the post-translational modification Phosphothreonine. Residues 793–804 are compositionally biased toward basic and acidic residues; it reads TAEKSTAEKDEL. The Prevents secretion from ER signature appears at 801–804; that stretch reads KDEL.

The protein belongs to the heat shock protein 90 family. In terms of assembly, homodimer; disulfide-linked. Component of an EIF2 complex at least composed of CELF1/CUGBP1, CALR, CALR3, EIF2S1, EIF2S2, HSP90B1 and HSPA5. Part of a large chaperone multiprotein complex comprising DNAJB11, HSP90B1, HSPA5, HYOU, PDIA2, PDIA4, PDIA6, PPIB, SDF2L1, UGGT1 and very small amounts of ERP29, but not, or at very low levels, CALR nor CANX. Interacts with AIMP1; regulates its retention in the endoplasmic reticulum. Hyperglycosylated form interacts with OS9; promoting its degradation by the endoplasmic reticulum associated degradation (ERAD). Interacts with CNPY3. This interaction is disrupted in the presence of ATP. Interacts with TLR4 and TLR9, but not with TLR3. Interacts with MZB1 in a calcium-dependent manner. Interacts with METTL23. Interacts with IL1B; the interaction facilitates cargo translocation into the ERGIC. Interacts with EIF2AK3. Post-translationally, phosphorylated by CK2. In terms of processing, N-glycosylated cotranslationally at Asn-217 by STT3A-containing OST-A complex: this glycosylation is constitutive. In response to various stress, 5 additional facultative sites (Asn-62, Asn-107, Asn-445, Asn-481 and Asn-502) can be glycosylated post-translationally by STT3B-containing OST-B complex, leading to a hyperglycosylated form that is degraded by the ER-associated degradation (ERAD) pathway. In normal conditions, the OST-A complex together with CCDC134 prevent glycosylation at facultative sites during protein folding, thereby preventing hyperglycosylation. Mechanistically, nascent HSP90B1 is tethered during translation to a specialized CCDC134-containing translocon that forms a microenvironment for its folding, in which STT3A associates with the SRT pseudosubstrate motif, and prevents access to facultative glycosylation sites until folding is completed, rendering its facultative sites inaccessible to the OST-B complex.

The protein localises to the endoplasmic reticulum lumen. The protein resides in the sarcoplasmic reticulum lumen. It is found in the melanosome. The catalysed reaction is ATP + H2O = ADP + phosphate + H(+). ATP-dependent chaperone involved in the processing of proteins in the endoplasmic reticulum, regulating their transport. Together with MESD, acts as a modulator of the Wnt pathway by promoting the folding of LRP6, a coreceptor of the canonical Wnt pathway. When associated with CNPY3, required for proper folding of Toll-like receptors. Promotes folding and trafficking of TLR4 to the cell surface. May participate in the unfolding of cytosolic leaderless cargos (lacking the secretion signal sequence) such as the interleukin 1/IL-1 to facilitate their translocation into the ERGIC (endoplasmic reticulum-Golgi intermediate compartment) and secretion; the translocation process is mediated by the cargo receptor TMED10. The sequence is that of Endoplasmin (HSP90B1) from Bos taurus (Bovine).